Reading from the N-terminus, the 144-residue chain is Maximins 7/H13 (144 aa).

Positions 1–18 (MNFKYIVAVSFLIASAYA) are cleaved as a signal peptide. Residues 19 to 43 (RSEENDEQSLSQRDVLEEESLREIR) constitute a propeptide that is removed on maturation. An Asparagine amide modification is found at Asn-70. The propeptide occupies 74-123 (TAEDHEVMKRLEAVMRDLDSLDYPEEAAERETRGFNQEEIANLFTKKEKR). Leu-143 is subject to Leucine amide.

It belongs to the bombinin family. Expressed by the skin glands.

The protein localises to the secreted. Functionally, maximin-7 shows antimicrobial activity against bacteria and against the fungus C.albicans. It has little hemolytic activity. In terms of biological role, maximin-H13 shows antimicrobial activity against bacteria and against the fungus C.albicans. Shows strong hemolytic activity. The protein is Maximins 7/H13 of Bombina maxima (Giant fire-bellied toad).